The chain runs to 540 residues: Phosphomethylpyrimidine synthase (540 aa).

Substrate-binding positions include asparagine 143, methionine 172, tyrosine 201, histidine 237, 257–259 (SRG), 298–301 (DGLR), and glutamate 337. Histidine 341 lines the Zn(2+) pocket. Position 364 (tyrosine 364) interacts with substrate. Histidine 405 serves as a coordination point for Zn(2+). Positions 485, 488, and 493 each coordinate [4Fe-4S] cluster.

The protein belongs to the ThiC family. [4Fe-4S] cluster serves as cofactor.

The enzyme catalyses 5-amino-1-(5-phospho-beta-D-ribosyl)imidazole + S-adenosyl-L-methionine = 4-amino-2-methyl-5-(phosphooxymethyl)pyrimidine + CO + 5'-deoxyadenosine + formate + L-methionine + 3 H(+). Its pathway is cofactor biosynthesis; thiamine diphosphate biosynthesis. Catalyzes the synthesis of the hydroxymethylpyrimidine phosphate (HMP-P) moiety of thiamine from aminoimidazole ribotide (AIR) in a radical S-adenosyl-L-methionine (SAM)-dependent reaction. In Mycobacterium avium (strain 104), this protein is Phosphomethylpyrimidine synthase.